The sequence spans 101 residues: Urease subunit beta (101 aa).

This sequence belongs to the urease beta subunit family. In terms of assembly, heterotrimer of UreA (gamma), UreB (beta) and UreC (alpha) subunits. Three heterotrimers associate to form the active enzyme.

Its subcellular location is the cytoplasm. It catalyses the reaction urea + 2 H2O + H(+) = hydrogencarbonate + 2 NH4(+). It participates in nitrogen metabolism; urea degradation; CO(2) and NH(3) from urea (urease route): step 1/1. The protein is Urease subunit beta of Haemophilus influenzae (strain 86-028NP).